The sequence spans 367 residues: Splicing factor U2AF-associated protein 2 (367 aa).

The disordered stretch occupies residues 36-104; sequence YDPNSLKMNK…SKSENSEASP (69 aa). Over residues 61–78 the composition is skewed to basic and acidic residues; it reads TEGKESSNGEDRHTKRLY. 2 consecutive RRM domains span residues 112–193 and 268–329; these read VYIQ…KMRV and LLID…VVEA.

The protein belongs to the HTATSF1 family. Interacts with the U2AF large and U2AF small subunits.

Its function is as follows. Has a role in pre-mRNA splicing. This is Splicing factor U2AF-associated protein 2 (uap2) from Schizosaccharomyces pombe (strain 972 / ATCC 24843) (Fission yeast).